The sequence spans 662 residues: A-kinase anchor protein 10, mitochondrial (662 aa).

A mitochondrion-targeting transit peptide spans 1–28; sequence MRGAGPSPRHSPRALRPDPGPAMSFFRR. Disordered stretches follow at residues 1 to 55, 178 to 205, and 242 to 280; these read MRGA…SPQK, KQSS…ALDR, and GHSA…NSCS. A compositionally biased stretch (basic and acidic residues) spans 32–43; sequence GKEQEKTLDVKS. Phosphoserine occurs at positions 52 and 189. 2 RGS domains span residues 125-369 and 379-505; these read TLEQ…CKYQ and YLAD…YKYL. A compositionally biased stretch (polar residues) spans 256 to 280; sequence GSHQIPTDSQDSSSRLAVGSRNSCS. Ser-281 carries the post-translational modification Phosphoserine. Residues 634-647 are PKA-RII subunit binding; that stretch reads LAWKIAKMIVSDVM.

As to expression, highly expressed in testis, kidney and lung, followed by brain, skeletal muscle, liver, spleen and heart. Also expressed in brown adipose tissue and pancreas.

It localises to the mitochondrion. Its subcellular location is the membrane. The protein localises to the cytoplasm. In terms of biological role, differentially targeted protein that binds to type I and II regulatory subunits of protein kinase A and anchors them to the mitochondria or the plasma membrane. Although the physiological relevance between PKA and AKAPS with mitochondria is not fully understood, one idea is that BAD, a proapoptotic member, is phosphorylated and inactivated by mitochondria-anchored PKA. It cannot be excluded too that it may facilitate PKA as well as G protein signal transduction, by acting as an adapter for assembling multiprotein complexes. With its RGS domain, it could lead to the interaction to G-alpha proteins, providing a link between the signaling machinery and the downstream kinase. In Mus musculus (Mouse), this protein is A-kinase anchor protein 10, mitochondrial (Akap10).